A 565-amino-acid polypeptide reads, in one-letter code: Periplasmic trehalase (565 aa).

Positions 1–30 are cleaved as a signal peptide; that stretch reads MKSPAPSRPQKMALIPACIFLCFAALSVQA. Residues R152, 159-160, N196, 205-207, 277-279, and G310 contribute to the substrate site; these read WD, RSQ, and RPE. Residues D312 and E496 each act as proton donor/acceptor in the active site. E511 is a substrate binding site. The disordered stretch occupies residues 539 to 565; sequence CDNVPATRPLSESTTQPVKPKEAEPTL.

It belongs to the glycosyl hydrolase 37 family. As to quaternary structure, monomer.

The protein resides in the periplasm. The enzyme catalyses alpha,alpha-trehalose + H2O = alpha-D-glucose + beta-D-glucose. Provides the cells with the ability to utilize trehalose at high osmolarity by splitting it into glucose molecules that can subsequently be taken up by the phosphotransferase-mediated uptake system. This is Periplasmic trehalase from Shigella dysenteriae serotype 1 (strain Sd197).